Consider the following 245-residue polypeptide: Eukaryotic translation initiation factor 6 (245 aa).

Belongs to the eIF-6 family. In terms of assembly, monomer. Associates with the 60S ribosomal subunit.

It localises to the cytoplasm. The protein localises to the nucleus. It is found in the nucleolus. Binds to the 60S ribosomal subunit and prevents its association with the 40S ribosomal subunit to form the 80S initiation complex in the cytoplasm. May also be involved in ribosome biogenesis. This Ostreococcus lucimarinus (strain CCE9901) protein is Eukaryotic translation initiation factor 6.